Reading from the N-terminus, the 206-residue chain is Large ribosomal subunit protein uL4 (206 aa).

The segment at A55–S80 is disordered.

It belongs to the universal ribosomal protein uL4 family. In terms of assembly, part of the 50S ribosomal subunit.

One of the primary rRNA binding proteins, this protein initially binds near the 5'-end of the 23S rRNA. It is important during the early stages of 50S assembly. It makes multiple contacts with different domains of the 23S rRNA in the assembled 50S subunit and ribosome. Functionally, forms part of the polypeptide exit tunnel. This Nitratidesulfovibrio vulgaris (strain DSM 19637 / Miyazaki F) (Desulfovibrio vulgaris) protein is Large ribosomal subunit protein uL4.